The chain runs to 348 residues: Trace amine-associated receptor 9 (348 aa).

At 1-33 the chain is on the extracellular side; the sequence is MTSDFSPEPPMELCYENVNGSCIKSSYAPWPRA. Asparagine 19 carries N-linked (GlcNAc...) asparagine glycosylation. Disulfide bonds link cysteine 22–cysteine 186 and cysteine 105–cysteine 190. A helical transmembrane segment spans residues 34–58; it reads ILYGVLGLGALLAVFGNLLVIIAIL. At 59 to 68 the chain is on the cytoplasmic side; that stretch reads HFKQLHTPTN. A helical membrane pass occupies residues 69–90; that stretch reads FLVASLACADFLVGVTVMPFST. Topologically, residues 91-105 are extracellular; sequence VRSVESCWYFGESYC. The chain crosses the membrane as a helical span at residues 106-128; that stretch reads KFHTCFDTSFCFASLFHLCCISI. Residues aspartate 112 and threonine 113 each contribute to the spermidine site. Residues 129 to 148 are Cytoplasmic-facing; it reads DRYIAVTDPLTYPTKFTVSV. Residues 149-170 form a helical membrane-spanning segment; that stretch reads SGLCIALSWFFSVTYSFSIFYT. At 171–196 the chain is on the extracellular side; it reads GANEEGIEELVVALTCVGGCQAPLNQ. Residues 174-187 are extracellular Loop 2 (ECL2); the sequence is EEGIEELVVALTCV. The chain crosses the membrane as a helical span at residues 197–218; that stretch reads NWVLLCFLLFFLPTVVMVFLYG. The Cytoplasmic portion of the chain corresponds to 219 to 256; it reads RIFLVAKYQARKIEGTANQAQASSESYKERVAKRERKA. Residues 257-280 traverse the membrane as a helical segment; the sequence is AKTLGIAMAAFLVSWLPYIIDAVI. Residues 281-293 are Extracellular-facing; that stretch reads DAYMNFITPAYVY. A helical membrane pass occupies residues 294-314; sequence EILVWCVYYNSAMNPLIYAFF. Topologically, residues 315–348 are cytoplasmic; that stretch reads YPWFRKAIKLIVSGKVFRADSSTTNLFSEEAGAG.

This sequence belongs to the G-protein coupled receptor 1 family. As to expression, specifically expressed in neurons of the olfactory epithelium.

The protein localises to the cell membrane. Olfactory receptor specific for trace amines, such as triethylamine, N,N-dimethylcyclohexylamine (DMCHA), beta-phenylethylamine (beta-PEA), cadaverine (CAD) and polyamines such as spermine and spermidine. Trace amine compounds are enriched in animal body fluids and act on trace amine-associated receptors (TAARs) to elicit both intraspecific and interspecific innate behaviors. Trace amine-binding causes a conformation change that triggers signaling via G(s)-class of G alpha proteins (GNAL or GNAS). In mature olfactory sensory neurons, Taar9 is coupled with GNAL/G(olf)G alpha protein and mediates activation of adenylate cyclase activity to activate cAMP signaling and eventually transmit odorant signals to achieve membrane depolarization. In immature olfactory sensory neurons, Taar9 is coupled with GNAS/G(s) G alpha proteins. This Mus musculus (Mouse) protein is Trace amine-associated receptor 9.